The following is a 480-amino-acid chain: Bifunctional protein HldE (480 aa).

Residues 1–316 form a ribokinase region; sequence MNMHDFSKTK…EQLNASMRHQ (316 aa). 192-195 provides a ligand contact to ATP; sequence NQGE. Asp-261 is a catalytic residue. The cytidylyltransferase stretch occupies residues 342–480; it reads FTNGCFDLLH…EAEIKEGAAQ (139 aa).

It in the N-terminal section; belongs to the carbohydrate kinase PfkB family. In the C-terminal section; belongs to the cytidylyltransferase family. Homodimer.

The catalysed reaction is D-glycero-beta-D-manno-heptose 7-phosphate + ATP = D-glycero-beta-D-manno-heptose 1,7-bisphosphate + ADP + H(+). The enzyme catalyses D-glycero-beta-D-manno-heptose 1-phosphate + ATP + H(+) = ADP-D-glycero-beta-D-manno-heptose + diphosphate. Its pathway is nucleotide-sugar biosynthesis; ADP-L-glycero-beta-D-manno-heptose biosynthesis; ADP-L-glycero-beta-D-manno-heptose from D-glycero-beta-D-manno-heptose 7-phosphate: step 1/4. It functions in the pathway nucleotide-sugar biosynthesis; ADP-L-glycero-beta-D-manno-heptose biosynthesis; ADP-L-glycero-beta-D-manno-heptose from D-glycero-beta-D-manno-heptose 7-phosphate: step 3/4. Catalyzes the phosphorylation of D-glycero-D-manno-heptose 7-phosphate at the C-1 position to selectively form D-glycero-beta-D-manno-heptose-1,7-bisphosphate. Functionally, catalyzes the ADP transfer from ATP to D-glycero-beta-D-manno-heptose 1-phosphate, yielding ADP-D-glycero-beta-D-manno-heptose. The chain is Bifunctional protein HldE from Hydrogenovibrio crunogenus (strain DSM 25203 / XCL-2) (Thiomicrospira crunogena).